Here is a 407-residue protein sequence, read N- to C-terminus: POC1 centriolar protein homolog A (407 aa).

7 WD repeats span residues 17-56 (GHRD…RAYR), 59-98 (GHKD…ESTV), 101-140 (AHTA…FLFS), 143-182 (QHIN…CVHS), 185-224 (EHGG…LLQH), 227-266 (LHSA…LLYT), and 269-308 (GHQG…VDYG). Residues 317–357 (PATRASSSGTLPEVDPLVPPGRGRSQESMQSHSQEPVSVPQ) form a disordered region. Polar residues predominate over residues 342 to 357 (QESMQSHSQEPVSVPQ). Residues 369-397 (QLDVLTQTVSILEQRLTLTEDKLKQCLEN) adopt a coiled-coil conformation.

Belongs to the WD repeat POC1 family. As to quaternary structure, interacts with POC1B.

The protein localises to the cytoplasm. The protein resides in the cytoskeleton. It is found in the microtubule organizing center. It localises to the centrosome. Its subcellular location is the centriole. The protein localises to the cilium basal body. The protein resides in the spindle pole. Its function is as follows. Plays an important role in centriole assembly and/or stability and ciliogenesis. Involved in early steps of centriole duplication, as well as in the later steps of centriole length control. Acts in concert with POC1B to ensure centriole integrity and proper mitotic spindle formation. The chain is POC1 centriolar protein homolog A (POC1A) from Bos taurus (Bovine).